Consider the following 378-residue polypeptide: Glutamate 5-kinase (378 aa).

Lys20 is a binding site for ATP. 3 residues coordinate substrate: Ser60, Asp147, and Asn159. ATP-binding positions include Thr179–Asp180 and Thr221–Lys227. The region spanning Arg286–Met364 is the PUA domain.

Belongs to the glutamate 5-kinase family.

Its subcellular location is the cytoplasm. The catalysed reaction is L-glutamate + ATP = L-glutamyl 5-phosphate + ADP. The protein operates within amino-acid biosynthesis; L-proline biosynthesis; L-glutamate 5-semialdehyde from L-glutamate: step 1/2. Its function is as follows. Catalyzes the transfer of a phosphate group to glutamate to form L-glutamate 5-phosphate. In Bordetella pertussis (strain Tohama I / ATCC BAA-589 / NCTC 13251), this protein is Glutamate 5-kinase.